Reading from the N-terminus, the 32-residue chain is MNIVIVQLGSLALITLAGPIIIVLLFLKQGNL.

Residues 3 to 23 form a helical membrane-spanning segment; that stretch reads IVIVQLGSLALITLAGPIIIV.

This sequence belongs to the Psb30/Ycf12 family. As to quaternary structure, PSII is composed of 1 copy each of membrane proteins PsbA, PsbB, PsbC, PsbD, PsbE, PsbF, PsbH, PsbI, PsbJ, PsbK, PsbL, PsbM, PsbT, PsbY, PsbZ, Psb30/Ycf12, peripheral proteins of the oxygen-evolving complex and a large number of cofactors. It forms dimeric complexes.

It is found in the plastid. The protein resides in the chloroplast thylakoid membrane. A core subunit of photosystem II (PSII), probably helps stabilize the reaction center. The protein is Photosystem II reaction center protein Psb30 of Euglena viridis (Cercaria viridis).